Here is a 293-residue protein sequence, read N- to C-terminus: Bisanhydrobacterioruberin hydratase (293 aa).

Transmembrane regions (helical) follow at residues 36–56, 66–86, 89–109, 134–154, 171–191, 199–219, and 254–274; these read IAVVFPLVGAVTLLASAEGLL, FVLFGTFVMRLPLVAGIFPLV, RAGLALVALTLYSYGIELVGV, FGLPVFFFPLVLNAYLLVLLL, ATVMLVDLVLDPGAVAIGFWI, GVPWQNYAGWLLSGSVAVLLF, and LFYTNWVPFGLAALLGAGLLW.

The protein belongs to the BABR hydratase family.

The protein resides in the membrane. The enzyme catalyses bacterioruberin = bisanhydrobacterioruberin + 2 H2O. It functions in the pathway carotenoid biosynthesis. Its function is as follows. Involved in the biosynthesis of the acyclic C50 carotenoid bacterioruberin (BR). Catalyzes the reaction that introduces hydroxyl groups to C3'' and C3''' of bisanhydrobacterioruberin (BABR) to generate BR. This is Bisanhydrobacterioruberin hydratase from Haloarcula japonica (strain ATCC 49778 / DSM 6131 / JCM 7785 / NBRC 101032 / NCIMB 13157 / TR-1).